A 151-amino-acid chain; its full sequence is Acidic phospholipase A2 6 (151 aa).

An N-terminal signal peptide occupies residues 1-27 (MYPAHLLVLLAVCVSLLGAASIPARPL). 7 disulfides stabilise this stretch: cysteine 38-cysteine 104, cysteine 54-cysteine 151, cysteine 56-cysteine 72, cysteine 71-cysteine 132, cysteine 78-cysteine 125, cysteine 88-cysteine 118, and cysteine 111-cysteine 123. Ca(2+) is bound by residues tyrosine 55, glycine 57, and glycine 59. The active site involves histidine 75. A Ca(2+)-binding site is contributed by aspartate 76. Residue aspartate 126 is part of the active site.

It belongs to the phospholipase A2 family. Group I subfamily. D49 sub-subfamily. Requires Ca(2+) as cofactor. Expressed by the venom gland.

It localises to the secreted. The catalysed reaction is a 1,2-diacyl-sn-glycero-3-phosphocholine + H2O = a 1-acyl-sn-glycero-3-phosphocholine + a fatty acid + H(+). Its function is as follows. PLA2 catalyzes the calcium-dependent hydrolysis of the 2-acyl groups in 3-sn-phosphoglycerides. This is Acidic phospholipase A2 6 from Tropidechis carinatus (Australian rough-scaled snake).